A 1366-amino-acid chain; its full sequence is Collagen alpha-2(I) chain (1366 aa).

A signal peptide spans 1–22 (MLSFVDTRTLLLLAVTSCLATC). Gln23 bears the Pyrrolidone carboxylic acid mark. Positions 23-79 (QSLQEATARKGPTGDRGPRGERGPPGPPGRDGDDGIPGPPGPPGPPGPPGLGGNFAA) are cleaved as a propeptide — N-terminal propeptide. The disordered stretch occupies residues 27 to 1131 (EATARKGPTG…PRSPPSLRPK (1105 aa)). Residues 34-44 (PTGDRGPRGER) show a composition bias toward basic and acidic residues. The span at 59–71 (PGPPGPPGPPGPP) shows a compositional bias: pro residues. An Allysine modification is found at Lys84. A compositionally biased stretch (gly residues) spans 84–94 (KGVGLGPGPMG). Low complexity predominate over residues 95–132 (LMGPRGPPGASGAPGPQGFQGPAGEPGEPGQTGPAGAR). A compositionally biased stretch (basic and acidic residues) spans 141–155 (AGEDGHPGKPGRPGE). Residue Lys177 is modified to 5-hydroxylysine; alternate. Lys177 carries O-linked (Gal...) hydroxylysine; alternate glycosylation. Composition is skewed to low complexity over residues 225 to 254 (VGAPGPAGARGSDGSVGPVGPAGPIGSAGP), 279 to 293 (AGPRGEVGLPGVSGP), 300 to 321 (PGANGLTGAKGAAGLPGVAGAP), 330 to 345 (PGPVGAAGATGARGIV), 384 to 408 (NGEAGSAGPSGPPGLRGSPGSRGLP), 423 to 434 (RGATGPAGVRGP), 470 to 489 (LPGIDGRPGPIGPAGARGEP), and 513 to 531 (AGLAGARGAPGPDGNNGAQ). The segment covering 538-547 (GVQGGKGEQG) has biased composition (gly residues). The segment covering 594–611 (PGESGAAGPSGPIGSRGP) has biased composition (low complexity). Residues 634-643 (GASGPGGLPG) show a composition bias toward gly residues. Composition is skewed to low complexity over residues 668–690 (NPGRDGARGAPGAMGAPGPAGAT) and 717–737 (VGPAGPNGFAGPAGAAGQPGA). Over residues 738–747 (KGERGTKGPK) the composition is skewed to basic and acidic residues. The span at 756 to 765 (TGPIGSAGPS) shows a compositional bias: low complexity. The span at 775-784 (GSRGDGGPPG) shows a compositional bias: gly residues. Low complexity-rich tracts occupy residues 785–795 (ATGFPGAAGRT), 863–876 (PQGLLGAPGILGLP), 893–932 (EPGPLGIAGPPGARGPPGAVGAPGVNGAPGEAGRDGNPGN), 951–974 (PGNIGPVGAVGAPGPHGPVGPTGK), and 981–1001 (PGPAGSVGPVGAVGPRGPSGP). Basic and acidic residues predominate over residues 1005–1016 (RGDKGEPGEKGP). Pro residues predominate over residues 1089–1103 (AGPPGPPGPPGPPGP). Positions 1120–1366 (DQPRSPPSLR…RVDVGPVCFK (247 aa)) are cleaved as a propeptide — C-terminal propeptide. Residues 1133–1366 (YEVDATLKSL…RVDVGPVCFK (234 aa)) enclose the Fibrillar collagen NC1 domain. 3 cysteine pairs are disulfide-bonded: Cys1163/Cys1195, Cys1203/Cys1364, and Cys1272/Cys1317. Asp1181, Asn1183, Gln1184, Cys1186, and Asp1189 together coordinate Ca(2+).

Belongs to the fibrillar collagen family. As to quaternary structure, trimers of one alpha 2(I) and two alpha 1(I) chains. Interacts (via C-terminus) with TMEM131 (via PapD-L domain); the interaction is direct and is involved in assembly and TRAPPIII ER-to-Golgi transport complex-dependent secretion of collagen. Prolines at the third position of the tripeptide repeating unit (G-X-Y) are hydroxylated in some or all of the chains. In terms of tissue distribution, forms the fibrils of tendon, ligaments and bones. In bones the fibrils are mineralized with calcium hydroxyapatite.

It is found in the secreted. Its subcellular location is the extracellular space. The protein resides in the extracellular matrix. Type I collagen is a member of group I collagen (fibrillar forming collagen). The protein is Collagen alpha-2(I) chain (COL1A2) of Canis lupus familiaris (Dog).